The primary structure comprises 446 residues: Tubulin beta chain (446 aa).

Residues Gln11, Glu69, Ser138, Gly142, Thr143, Gly144, Asn204, and Asn226 each coordinate GTP. Glu69 contacts Mg(2+). The disordered stretch occupies residues 423-446 (QQYQDATADEEEGEYEEEPAEEEQ). Over residues 429–446 (TADEEEGEYEEEPAEEEQ) the composition is skewed to acidic residues.

Belongs to the tubulin family. In terms of assembly, dimer of alpha and beta chains. A typical microtubule is a hollow water-filled tube with an outer diameter of 25 nm and an inner diameter of 15 nM. Alpha-beta heterodimers associate head-to-tail to form protofilaments running lengthwise along the microtubule wall with the beta-tubulin subunit facing the microtubule plus end conferring a structural polarity. Microtubules usually have 13 protofilaments but different protofilament numbers can be found in some organisms and specialized cells. It depends on Mg(2+) as a cofactor.

The protein resides in the cytoplasm. The protein localises to the cytoskeleton. Its function is as follows. Tubulin is the major constituent of microtubules, a cylinder consisting of laterally associated linear protofilaments composed of alpha- and beta-tubulin heterodimers. Microtubules grow by the addition of GTP-tubulin dimers to the microtubule end, where a stabilizing cap forms. Below the cap, tubulin dimers are in GDP-bound state, owing to GTPase activity of alpha-tubulin. This Pleurotus sajor-caju (Oyster mushroom) protein is Tubulin beta chain.